Here is a 104-residue protein sequence, read N- to C-terminus: MSNYAIIKTGGKQLKVEEGSVIYVEKLNVEAGQTVTFDEVIFVGGETTKVGAPLVEGATVVGEVEKHGKQKKVVTFQYKPKKHSHRKQGHRQPYTKVVIKSVNA.

This sequence belongs to the bacterial ribosomal protein bL21 family. Part of the 50S ribosomal subunit. Contacts protein L20.

In terms of biological role, this protein binds to 23S rRNA in the presence of protein L20. The sequence is that of Large ribosomal subunit protein bL21 from Lactococcus lactis subsp. lactis (strain IL1403) (Streptococcus lactis).